The following is a 1131-amino-acid chain: PolyA-specific ribonuclease subunit panl-2 (1131 aa).

The region spanning 489-864 (VTMQSTHGMN…LPALLAYKKK (376 aa)) is the USP domain. The 166-residue stretch at 909-1074 (VGLDAEFIKI…VDARYALKLY (166 aa)) folds into the Exonuclease domain. Residues 1104-1115 (QTSSPLVVSTTR) show a composition bias toward polar residues. The interval 1104–1131 (QTSSPLVVSTTRKTPEDTNPADAAPKSV) is disordered.

The protein is PolyA-specific ribonuclease subunit panl-2 of Caenorhabditis elegans.